Consider the following 239-residue polypeptide: MKISSIDSIFAAWDGSITEARRLQSDMAERIVLKDEPNLLSEPTLLAGFDVGFEDEGRTTRAAAVLMNAGDLRLLETHVVRVPTSMPYVPGLLSFRELPALLQALTQLSRIPALVFVDGHGIAHPRRLGIAAHFGLVTNLPCIGVAKKRLVGDFVEPGTAFGEHTPILLHGTQVGWALRSKMHCKPLIISPGHKVSLHSALTWTQRCLTGYRLPEPTRQADRLASRRGQKIVSDLPSLL.

Mg(2+)-binding residues include aspartate 50 and aspartate 118.

This sequence belongs to the endonuclease V family. It depends on Mg(2+) as a cofactor.

It localises to the cytoplasm. The catalysed reaction is Endonucleolytic cleavage at apurinic or apyrimidinic sites to products with a 5'-phosphate.. Functionally, DNA repair enzyme involved in the repair of deaminated bases. Selectively cleaves double-stranded DNA at the second phosphodiester bond 3' to a deoxyinosine leaving behind the intact lesion on the nicked DNA. This is Endonuclease V from Xylella fastidiosa (strain Temecula1 / ATCC 700964).